The following is an 883-amino-acid chain: Bifunctional heparan sulfate N-deacetylase/N-sulfotransferase 2 (883 aa).

At Met1–Arg18 the chain is on the cytoplasmic side. Residues Leu19–Ser39 form a helical; Signal-anchor for type II membrane protein membrane-spanning segment. The Lumenal segment spans residues Thr40–Gly883. The interval Ser41–Glu597 is heparan sulfate N-deacetylase 2. The segment at Pro49–Arg82 is disordered. Residues Pro65–Pro77 are compositionally biased toward pro residues. N-linked (GlcNAc...) asparagine glycans are attached at residues Asn233, Asn350, and Asn400. The heparan sulfate N-sulfotransferase 2 stretch occupies residues Lys598–Gly883. The For sulfotransferase activity role is filled by Lys613. Position 613-617 (Lys613–Thr617) interacts with 3'-phosphoadenylyl sulfate. An N-linked (GlcNAc...) asparagine glycan is attached at Asn666. A 3'-phosphoadenylyl sulfate-binding site is contributed by Ser711. 2 N-linked (GlcNAc...) asparagine glycosylation sites follow: Asn726 and Asn802. A disulfide bridge connects residues Cys817 and Cys827. 3'-phosphoadenylyl sulfate is bound at residue Lys832 to Tyr836.

Belongs to the sulfotransferase 1 family. NDST subfamily. Monomer. Widely expressed in adult and throughout development.

Its subcellular location is the golgi apparatus membrane. The enzyme catalyses alpha-D-glucosaminyl-[heparan sulfate](n) + 3'-phosphoadenylyl sulfate = N-sulfo-alpha-D-glucosaminyl-[heparan sulfate](n) + adenosine 3',5'-bisphosphate + 2 H(+). It functions in the pathway glycan metabolism; heparan sulfate biosynthesis. The protein operates within glycan metabolism; heparin biosynthesis. In terms of biological role, essential bifunctional enzyme that catalyzes both the N-deacetylation and the N-sulfation of glucosamine (GlcNAc) of the glycosaminoglycan in heparan sulfate. Modifies the GlcNAc-GlcA disaccharide repeating sugar backbone to make N-sulfated heparosan, a prerequisite substrate for later modifications in heparin biosynthesis. Plays a role in determining the extent and pattern of sulfation of heparan sulfate. Required for the exosomal release of SDCBP, CD63 and syndecan. The sequence is that of Bifunctional heparan sulfate N-deacetylase/N-sulfotransferase 2 (Ndst2) from Mus musculus (Mouse).